Here is a 417-residue protein sequence, read N- to C-terminus: NADH-quinone oxidoreductase subunit D (417 aa).

Belongs to the complex I 49 kDa subunit family. NDH-1 is composed of 14 different subunits. Subunits NuoB, C, D, E, F, and G constitute the peripheral sector of the complex.

It is found in the cell inner membrane. The catalysed reaction is a quinone + NADH + 5 H(+)(in) = a quinol + NAD(+) + 4 H(+)(out). In terms of biological role, NDH-1 shuttles electrons from NADH, via FMN and iron-sulfur (Fe-S) centers, to quinones in the respiratory chain. The immediate electron acceptor for the enzyme in this species is believed to be ubiquinone. Couples the redox reaction to proton translocation (for every two electrons transferred, four hydrogen ions are translocated across the cytoplasmic membrane), and thus conserves the redox energy in a proton gradient. In Francisella tularensis subsp. holarctica (strain FTNF002-00 / FTA), this protein is NADH-quinone oxidoreductase subunit D.